Consider the following 445-residue polypeptide: 3-phosphoshikimate 1-carboxyvinyltransferase (445 aa).

Polar residues predominate over residues 1–20 (MSSTHPGRTIRSGATQNLSG). Positions 1–24 (MSSTHPGRTIRSGATQNLSGTIRP) are disordered. Residues Lys28, Ser29, and Arg33 each contribute to the 3-phosphoshikimate site. Lys28 serves as a coordination point for phosphoenolpyruvate. Phosphoenolpyruvate is bound by residues Gly101 and Arg129. Residues Ser174, Gln176, Asp322, and Lys349 each coordinate 3-phosphoshikimate. Gln176 contacts phosphoenolpyruvate. Asp322 functions as the Proton acceptor in the catalytic mechanism. Arg353 and Arg397 together coordinate phosphoenolpyruvate.

The protein belongs to the EPSP synthase family. As to quaternary structure, monomer.

Its subcellular location is the cytoplasm. The catalysed reaction is 3-phosphoshikimate + phosphoenolpyruvate = 5-O-(1-carboxyvinyl)-3-phosphoshikimate + phosphate. It functions in the pathway metabolic intermediate biosynthesis; chorismate biosynthesis; chorismate from D-erythrose 4-phosphate and phosphoenolpyruvate: step 6/7. In terms of biological role, catalyzes the transfer of the enolpyruvyl moiety of phosphoenolpyruvate (PEP) to the 5-hydroxyl of shikimate-3-phosphate (S3P) to produce enolpyruvyl shikimate-3-phosphate and inorganic phosphate. The sequence is that of 3-phosphoshikimate 1-carboxyvinyltransferase from Magnetococcus marinus (strain ATCC BAA-1437 / JCM 17883 / MC-1).